A 54-amino-acid chain; its full sequence is Pars intercerebralis major peptide D1 (54 aa).

It belongs to the granulin family. Post-translationally, six disulfide bonds are present. As to expression, brain.

It localises to the secreted. The protein is Pars intercerebralis major peptide D1 of Locusta migratoria (Migratory locust).